The following is a 328-amino-acid chain: Phenylalanine--tRNA ligase alpha subunit (328 aa).

Mg(2+) is bound at residue Glu-245.

The protein belongs to the class-II aminoacyl-tRNA synthetase family. Phe-tRNA synthetase alpha subunit type 1 subfamily. Tetramer of two alpha and two beta subunits. Mg(2+) is required as a cofactor.

The protein localises to the cytoplasm. The enzyme catalyses tRNA(Phe) + L-phenylalanine + ATP = L-phenylalanyl-tRNA(Phe) + AMP + diphosphate + H(+). The polypeptide is Phenylalanine--tRNA ligase alpha subunit (Helicobacter pylori (strain Shi470)).